Consider the following 480-residue polypeptide: Krueppel-like factor 10 (480 aa).

Polar residues predominate over residues 1 to 12; sequence MLNFGASLQQAS. Disordered regions lie at residues 1-32, 64-83, and 97-146; these read MLNFGASLQQASEGKMELISEKSKEGAHPWDK, VTPVSDTSEEDSLLPGTPDL, and PSDF…APPL. The segment covering 14–32 has biased composition (basic and acidic residues); it reads GKMELISEKSKEGAHPWDK. S183 carries the post-translational modification Phosphoserine. Residues 202 to 222 form a disordered region; it reads AAVSPNRPKPEPSTAANGAEK. The residue at position 249 (S249) is a Phosphoserine. 3 consecutive C2H2-type zinc fingers follow at residues 369 to 393, 399 to 423, and 429 to 451; these read HICSHPGCGKTYFKSSHLKAHVRTH, FSCSWKGCERRFARSDELSRHRRTH, and FACPMCDRRFMRSDHLTKHARRH.

The protein belongs to the Sp1 C2H2-type zinc-finger protein family. Post-translationally, ubiquitinated; mediated by SIAH1 and leading to its subsequent proteasomal degradation.

It is found in the nucleus. In terms of biological role, transcriptional repressor which binds to the consensus sequence 5'-GGTGTG-3'. Regulates the circadian expression of genes involved in lipogenesis, gluconeogenesis, and glycolysis in the liver. Represses the expression of PCK2, a rate-limiting step enzyme of gluconeogenesis. May play a role in the cell cycle regulation. Plays a role in the regulation of the circadian clock; binds to the GC box sequence in the promoter of the core clock component ARTNL/BMAL1 and represses its transcriptional activity. The polypeptide is Krueppel-like factor 10 (Klf10) (Rattus norvegicus (Rat)).